The sequence spans 193 residues: dCTP deaminase (193 aa).

Residues 110 to 115 (RSSLAR), Asp-128, 136 to 138 (VLE), Tyr-171, Lys-178, and Gln-182 each bind dCTP. Glu-138 serves as the catalytic Proton donor/acceptor. The segment at 174-193 (RKNAKYKDQQEAVASRISQD) is disordered.

This sequence belongs to the dCTP deaminase family. In terms of assembly, homotrimer.

It catalyses the reaction dCTP + H2O + H(+) = dUTP + NH4(+). It participates in pyrimidine metabolism; dUMP biosynthesis; dUMP from dCTP (dUTP route): step 1/2. Catalyzes the deamination of dCTP to dUTP. This is dCTP deaminase from Shewanella sp. (strain W3-18-1).